The primary structure comprises 257 residues: GTP cyclohydrolase FolE2 (257 aa).

The protein belongs to the GTP cyclohydrolase IV family.

The enzyme catalyses GTP + H2O = 7,8-dihydroneopterin 3'-triphosphate + formate + H(+). The protein operates within cofactor biosynthesis; 7,8-dihydroneopterin triphosphate biosynthesis; 7,8-dihydroneopterin triphosphate from GTP: step 1/1. Functionally, converts GTP to 7,8-dihydroneopterin triphosphate. The chain is GTP cyclohydrolase FolE2 from Dictyoglomus thermophilum (strain ATCC 35947 / DSM 3960 / H-6-12).